Consider the following 357-residue polypeptide: 3-isopropylmalate dehydrogenase (357 aa).

76–89 lines the NAD(+) pocket; that stretch reads GPKWDNEPSHNRPE. Positions 96, 106, 135, and 223 each coordinate substrate. Residues Asp-223, Asp-247, and Asp-251 each contribute to the Mg(2+) site. 281 to 293 serves as a coordination point for NAD(+); that stretch reads GSAPDIAGQDKAN.

It belongs to the isocitrate and isopropylmalate dehydrogenases family. LeuB type 1 subfamily. Homodimer. Mg(2+) is required as a cofactor. Requires Mn(2+) as cofactor.

It localises to the cytoplasm. It catalyses the reaction (2R,3S)-3-isopropylmalate + NAD(+) = 4-methyl-2-oxopentanoate + CO2 + NADH. It participates in amino-acid biosynthesis; L-leucine biosynthesis; L-leucine from 3-methyl-2-oxobutanoate: step 3/4. Its function is as follows. Catalyzes the oxidation of 3-carboxy-2-hydroxy-4-methylpentanoate (3-isopropylmalate) to 3-carboxy-4-methyl-2-oxopentanoate. The product decarboxylates to 4-methyl-2 oxopentanoate. In Helicobacter hepaticus (strain ATCC 51449 / 3B1), this protein is 3-isopropylmalate dehydrogenase.